The following is a 386-amino-acid chain: Adiponectin receptor protein 2 (386 aa).

A disordered region spans residues 1–72; that stretch reads MNEPAKHRLG…ECHDDNSQED (72 aa). At 1 to 147 the chain is on the cytoplasmic side; it reads MNEPAKHRLG…SIFRIHTETG (147 aa). Residues 15–31 show a composition bias toward basic and acidic residues; that stretch reads PEPDIRLRKGHQLDDTR. Over residues 58–72 the composition is skewed to acidic residues; sequence SPEEPECHDDNSQED. Residues 148–168 form a helical membrane-spanning segment; sequence NIWTHLLGCVFFLCLGIFYMF. Over 169 to 181 the chain is Extracellular; the sequence is RPNISFVAPLQEK. A helical transmembrane segment spans residues 182 to 202; it reads VVFGLFFLGAILCLSFSWLFH. Residue H202 coordinates Zn(2+). Topologically, residues 203 to 213 are cytoplasmic; that stretch reads TVYCHSEGVSR. Residues 214–234 form a helical membrane-spanning segment; the sequence is LFSKLDYSGIALLIMGSFVPW. At 235 to 245 the chain is on the extracellular side; it reads LYYSFYCNPQP. Residues 246–266 traverse the membrane as a helical segment; sequence CFIYLIVICVLGIAAIIVSQW. At 267–273 the chain is on the cytoplasmic side; it reads DMFATPQ. Residues 274 to 294 traverse the membrane as a helical segment; sequence YRGVRAGVFVGLGLSGIIPTL. The Extracellular portion of the chain corresponds to 295–309; it reads HYVISEGFLKAATIG. The chain crosses the membrane as a helical span at residues 310 to 330; that stretch reads QIGWLMLMASLYITGAALYAA. The Cytoplasmic portion of the chain corresponds to 331-348; that stretch reads RIPERFFPGKCDIWFHSH. Residues H348 and H352 each coordinate Zn(2+). A helical transmembrane segment spans residues 349–369; that stretch reads QLFHIFVVAGAFVHFHGVSNL. Residues 370–386 are Extracellular-facing; it reads QEFRFMIGGGCTEEDAL.

This sequence belongs to the ADIPOR family. May form homooligomers and heterooligomers with ADIPOR1. Interacts with APPL2 (via BAR domain); ADIPOQ dissociates this interaction. Detected in liver and quadriceps muscle (at protein level). Highly expressed in liver. Highly expressed in white adipose tissue, and at intermediate levels in brown adipose tissue. Expressed at intermediate level in heart, kidney, lung and skeletal muscle. Weakly expressed in brain, spleen and testis.

The protein resides in the cell membrane. Receptor for ADIPOQ, an essential hormone secreted by adipocytes that regulates glucose and lipid metabolism. Required for normal body fat and glucose homeostasis. ADIPOQ-binding activates a signaling cascade that leads to increased PPARA activity, and ultimately to increased fatty acid oxidation and glucose uptake. Has intermediate affinity for globular and full-length adiponectin. Required for normal revascularization after chronic ischemia caused by severing of blood vessels. The polypeptide is Adiponectin receptor protein 2 (Mus musculus (Mouse)).